The sequence spans 263 residues: Small ribosomal subunit protein uS15m (263 aa).

The transit peptide at 1-70 directs the protein to the mitochondrion; that stretch reads MVLKSVFRST…VRQYARPSRK (70 aa). Residues 238–251 are compositionally biased toward basic and acidic residues; that stretch reads EREKQKAEEAERKK. The segment at 238–263 is disordered; sequence EREKQKAEEAERKKSSSSTNPQETAA.

Belongs to the universal ribosomal protein uS15 family. As to quaternary structure, component of the mitochondrial ribosome small subunit (28S) which comprises a 12S rRNA and about 30 distinct proteins.

It is found in the mitochondrion. The sequence is that of Small ribosomal subunit protein uS15m (mrps15) from Danio rerio (Zebrafish).